Here is a 455-residue protein sequence, read N- to C-terminus: Eukaryotic translation initiation factor 3 subunit E (455 aa).

One can recognise a PCI domain in the interval 256–425 (TDLFFSPAYI…GTVIMNHPPQ (170 aa)).

It belongs to the eIF-3 subunit E family. Component of the eukaryotic translation initiation factor 3 (eIF-3) complex.

The protein localises to the cytoplasm. In terms of biological role, component of the eukaryotic translation initiation factor 3 (eIF-3) complex, which is involved in protein synthesis of a specialized repertoire of mRNAs and, together with other initiation factors, stimulates binding of mRNA and methionyl-tRNAi to the 40S ribosome. The eIF-3 complex specifically targets and initiates translation of a subset of mRNAs involved in cell proliferation. The protein is Eukaryotic translation initiation factor 3 subunit E (int6) of Neosartorya fischeri (strain ATCC 1020 / DSM 3700 / CBS 544.65 / FGSC A1164 / JCM 1740 / NRRL 181 / WB 181) (Aspergillus fischerianus).